The chain runs to 544 residues: Chaperonin GroEL 2 (544 aa).

Residues 29 to 32 (TLGP), Lys50, 86 to 90 (DGTTT), Gly414, and Asp494 contribute to the ATP site.

This sequence belongs to the chaperonin (HSP60) family. In terms of assembly, forms a cylinder of 14 subunits composed of two heptameric rings stacked back-to-back. Interacts with the co-chaperonin GroES.

The protein resides in the cytoplasm. The catalysed reaction is ATP + H2O + a folded polypeptide = ADP + phosphate + an unfolded polypeptide.. Functionally, together with its co-chaperonin GroES, plays an essential role in assisting protein folding. The GroEL-GroES system forms a nano-cage that allows encapsulation of the non-native substrate proteins and provides a physical environment optimized to promote and accelerate protein folding. In Psychromonas ingrahamii (strain DSM 17664 / CCUG 51855 / 37), this protein is Chaperonin GroEL 2.